The primary structure comprises 143 residues: Transcriptional regulator MraZ (143 aa).

2 consecutive SpoVT-AbrB domains span residues 5–47 and 76–119; these read EYQH…PMSE and ATEC…SKEI.

Belongs to the MraZ family. In terms of assembly, forms oligomers.

Its subcellular location is the cytoplasm. It localises to the nucleoid. The polypeptide is Transcriptional regulator MraZ (Bacillus licheniformis (strain ATCC 14580 / DSM 13 / JCM 2505 / CCUG 7422 / NBRC 12200 / NCIMB 9375 / NCTC 10341 / NRRL NRS-1264 / Gibson 46)).